A 401-amino-acid chain; its full sequence is Mitochondrial distribution and morphology protein 12 (401 aa).

The region spanning 1 to 401 is the SMP-LTD domain; it reads MSIDINWDTL…VYPSFWTFLV (401 aa). The segment covering 70–88 has biased composition (acidic residues); it reads YEEDEDYPDNEDDDDDEAG. 2 disordered regions span residues 70-95 and 190-247; these read YEED…NPRN and SLTL…EKSP. Low complexity predominate over residues 195-205; that stretch reads PQSHPDPSSRP. The segment covering 209–220 has biased composition (basic and acidic residues); the sequence is HQHDDERRRSLA.

Belongs to the MDM12 family. In terms of assembly, component of the ER-mitochondria encounter structure (ERMES) or MDM complex, composed of MMM1, MDM10, MDM12 and MDM34. An MMM1 homodimer associates with one molecule of MDM12 on each side in a pairwise head-to-tail manner, and the SMP-LTD domains of MMM1 and MDM12 generate a continuous hydrophobic tunnel for phospholipid trafficking.

It localises to the mitochondrion outer membrane. Its subcellular location is the endoplasmic reticulum membrane. Functionally, component of the ERMES/MDM complex, which serves as a molecular tether to connect the endoplasmic reticulum (ER) and mitochondria. Components of this complex are involved in the control of mitochondrial shape and protein biogenesis, and function in nonvesicular lipid trafficking between the ER and mitochondria. MDM12 is required for the interaction of the ER-resident membrane protein MMM1 and the outer mitochondrial membrane-resident beta-barrel protein MDM10. The MDM12-MMM1 subcomplex functions in the major beta-barrel assembly pathway that is responsible for biogenesis of all mitochondrial outer membrane beta-barrel proteins, and acts in a late step after the SAM complex. The MDM10-MDM12-MMM1 subcomplex further acts in the TOM40-specific pathway after the action of the MDM12-MMM1 complex. Essential for establishing and maintaining the structure of mitochondria and maintenance of mtDNA nucleoids. The polypeptide is Mitochondrial distribution and morphology protein 12 (Phaeosphaeria nodorum (strain SN15 / ATCC MYA-4574 / FGSC 10173) (Glume blotch fungus)).